The chain runs to 366 residues: Carbamoyl phosphate synthase small chain (366 aa).

The interval 1-170 (MLKKRYLVLE…TKSPYVSTGY (170 aa)) is CPSase. Positions 47, 221, and 223 each coordinate L-glutamine. One can recognise a Glutamine amidotransferase type-1 domain in the interval 173-360 (SVVLVDFGKK…IDMINEYKTK (188 aa)). Catalysis depends on C248, which acts as the Nucleophile. L-glutamine-binding residues include L249, Q252, N290, G292, and Y293. Active-site residues include H333 and E335.

This sequence belongs to the CarA family. As to quaternary structure, composed of two chains; the small (or glutamine) chain promotes the hydrolysis of glutamine to ammonia, which is used by the large (or ammonia) chain to synthesize carbamoyl phosphate. Tetramer of heterodimers (alpha,beta)4.

The enzyme catalyses hydrogencarbonate + L-glutamine + 2 ATP + H2O = carbamoyl phosphate + L-glutamate + 2 ADP + phosphate + 2 H(+). It catalyses the reaction L-glutamine + H2O = L-glutamate + NH4(+). It participates in amino-acid biosynthesis; L-arginine biosynthesis; carbamoyl phosphate from bicarbonate: step 1/1. It functions in the pathway pyrimidine metabolism; UMP biosynthesis via de novo pathway; (S)-dihydroorotate from bicarbonate: step 1/3. In terms of biological role, small subunit of the glutamine-dependent carbamoyl phosphate synthetase (CPSase). CPSase catalyzes the formation of carbamoyl phosphate from the ammonia moiety of glutamine, carbonate, and phosphate donated by ATP, constituting the first step of 2 biosynthetic pathways, one leading to arginine and/or urea and the other to pyrimidine nucleotides. The small subunit (glutamine amidotransferase) binds and cleaves glutamine to supply the large subunit with the substrate ammonia. This Staphylococcus saprophyticus subsp. saprophyticus (strain ATCC 15305 / DSM 20229 / NCIMB 8711 / NCTC 7292 / S-41) protein is Carbamoyl phosphate synthase small chain.